The primary structure comprises 39 residues: Cytochrome b6-f complex subunit 5 (39 aa).

Residues 5-25 (LLCGIVLGLVPITLLGLFVSA) traverse the membrane as a helical segment.

The protein belongs to the PetG family. The 4 large subunits of the cytochrome b6-f complex are cytochrome b6, subunit IV (17 kDa polypeptide, PetD), cytochrome f and the Rieske protein, while the 4 small subunits are PetG, PetL, PetM and PetN. The complex functions as a dimer.

It is found in the cellular thylakoid membrane. Component of the cytochrome b6-f complex, which mediates electron transfer between photosystem II (PSII) and photosystem I (PSI), cyclic electron flow around PSI, and state transitions. PetG is required for either the stability or assembly of the cytochrome b6-f complex. The protein is Cytochrome b6-f complex subunit 5 of Prochlorococcus marinus (strain MIT 9301).